A 400-amino-acid polypeptide reads, in one-letter code: Octopine dehydrogenase (400 aa).

Residues 10–13 and 35–38 contribute to the NADH site; these read GGNG and FADE. Glutamine 118 and threonine 143 together coordinate pyruvate. Glutamine 118 contacts substrate. Position 148 (cysteine 148) interacts with NAD(+). Methionine 206 is a binding site for L-arginine. Histidine 212 provides a ligand contact to pyruvate. Residue histidine 212 is part of the active site. Arginine 324 provides a ligand contact to NAD(+).

This sequence belongs to the lysopine/nopaline/octopine/opine/vitopine dehydrogenases family.

The enzyme catalyses D-octopine + NAD(+) + H2O = L-arginine + pyruvate + NADH + H(+). Functionally, catalyzes the reverse reaction of octopine dehydrogenation. Acts on L-arginine in preference to other substrates. The polypeptide is Octopine dehydrogenase (Mizuhopecten yessoensis (Japanese scallop)).